Reading from the N-terminus, the 139-residue chain is uncharacterized protein (139 aa).

In terms of domain architecture, HIT spans 5–114 (IFCKIINKEL…IPRFKNDGFG (110 aa)). The short motif at 99-103 (HTHFH) is the Histidine triad motif element.

This is an uncharacterized protein from Borreliella burgdorferi (strain ATCC 35210 / DSM 4680 / CIP 102532 / B31) (Borrelia burgdorferi).